Here is an 85-residue protein sequence, read N- to C-terminus: U4-theraphotoxin-Hhn1a (85 aa).

An N-terminal signal peptide occupies residues 1–22 (MKVTLIAILTCAAVLVLHTTAA). Positions 23-48 (EELEAESQLMEVGMPDTELEAVDEER) are excised as a propeptide. Disulfide bonds link Cys-52–Cys-66, Cys-56–Cys-77, and Cys-71–Cys-82.

It belongs to the neurotoxin 12 (Hwtx-2) family. 02 (Hwtx-2) subfamily. As to quaternary structure, monomer. Expressed by the venom gland.

Its subcellular location is the secreted. In terms of biological role, neurotoxin active on both insects and mammals. The protein is U4-theraphotoxin-Hhn1a of Cyriopagopus hainanus (Chinese bird spider).